The primary structure comprises 145 residues: Putative antiporter subunit mnhG2 (145 aa).

3 helical membrane-spanning segments follow: residues 11 to 31, 51 to 71, and 72 to 92; these read IAAV…IGIV, VLLT…FFSV, and RLLL…HLVA.

The protein belongs to the CPA3 antiporters (TC 2.A.63) subunit G family. May form a heterooligomeric complex that consists of seven subunits: mnhA2, mnhB2, mnhC2, mnhD2, mnhE2, mnhF2 and mnhG2.

The protein resides in the cell membrane. This is Putative antiporter subunit mnhG2 (mnhG2) from Staphylococcus aureus (strain bovine RF122 / ET3-1).